The sequence spans 20 residues: Maximin-Hu (20 aa).

The protein belongs to the bombinin family. Expressed by the skin glands.

It localises to the secreted. In terms of biological role, has antimicrobial activity. The polypeptide is Maximin-Hu (Bombina maxima (Giant fire-bellied toad)).